Reading from the N-terminus, the 225-residue chain is Orotate phosphoribosyltransferase (225 aa).

5-phospho-alpha-D-ribose 1-diphosphate contacts are provided by residues arginine 107, lysine 108, lysine 111, and 133 to 141; that span reads EDLTTDGGS. Threonine 137 contributes to the orotate binding site.

It belongs to the purine/pyrimidine phosphoribosyltransferase family. PyrE subfamily. As to quaternary structure, homodimer. Requires Mg(2+) as cofactor.

It catalyses the reaction orotidine 5'-phosphate + diphosphate = orotate + 5-phospho-alpha-D-ribose 1-diphosphate. The protein operates within pyrimidine metabolism; UMP biosynthesis via de novo pathway; UMP from orotate: step 1/2. Its function is as follows. Catalyzes the transfer of a ribosyl phosphate group from 5-phosphoribose 1-diphosphate to orotate, leading to the formation of orotidine monophosphate (OMP). This Roseobacter denitrificans (strain ATCC 33942 / OCh 114) (Erythrobacter sp. (strain OCh 114)) protein is Orotate phosphoribosyltransferase.